Reading from the N-terminus, the 415-residue chain is Histidine--tRNA ligase (415 aa).

This sequence belongs to the class-II aminoacyl-tRNA synthetase family. Homodimer.

It is found in the cytoplasm. The enzyme catalyses tRNA(His) + L-histidine + ATP = L-histidyl-tRNA(His) + AMP + diphosphate + H(+). In Clostridium botulinum (strain ATCC 19397 / Type A), this protein is Histidine--tRNA ligase.